A 374-amino-acid chain; its full sequence is MPIFTTPFASLELLRQPHQPNEPLQAFDAADEYLLNHLHEQGLRAEDSLLLLNDSFGALACSLAGRCQVTSSSDSHLGFIALENNLAGNGLNRDAVRFLPSSETPQGPFDWVLIRVPKTLALLEEQLIRLHGQLAPGARVVAAAMVKHLPRAAGDLLEKYIGPVQASLAVKKARLLLATPEAKAAPHSPYPTRYRLDKPALELINHANVFCRDGLDIGTRAFLPHLPRHLDARRVADLGCGNGVLGIAYALGSPQAQLTLVDESYMAVQSARENWAAALGERPATIRAGDGLAEQPAGSLDLVLCNPPFHQQQVVGDFLAWRMFQQARAALVTGGELWIVGNRHLGYHAKLARLFRGVEQVAANPKFVVLKASK.

It belongs to the methyltransferase superfamily. RlmG family.

It is found in the cytoplasm. It catalyses the reaction guanosine(1835) in 23S rRNA + S-adenosyl-L-methionine = N(2)-methylguanosine(1835) in 23S rRNA + S-adenosyl-L-homocysteine + H(+). Its function is as follows. Specifically methylates the guanine in position 1835 (m2G1835) of 23S rRNA. The chain is Ribosomal RNA large subunit methyltransferase G from Ectopseudomonas mendocina (strain ymp) (Pseudomonas mendocina).